A 484-amino-acid chain; its full sequence is UDP-glucose:undecaprenyl-phosphate glucose-1-phosphate transferase (484 aa).

5 consecutive transmembrane segments (helical) span residues Met37–Ala57, Tyr59–Leu79, Val93–Val113, Gly122–Leu142, and Ile299–Val319.

This sequence belongs to the bacterial sugar transferase family.

The protein resides in the cell inner membrane. It carries out the reaction di-trans,octa-cis-undecaprenyl phosphate + UDP-alpha-D-glucose = alpha-D-glucosyl di-trans,octa-cis-undecaprenyl diphosphate + UMP. It participates in glycan biosynthesis; xanthan biosynthesis. Its function is as follows. Is the initiating enzyme for the synthesis of the exopolysaccharide xanthan. Catalyzes the transfer of the glucose-1-phosphate moiety from UDP-Glc onto the carrier lipid undecaprenyl phosphate (C55-P), forming a phosphoanhydride bond yielding to glucosyl-pyrophosphoryl-undecaprenol (Glc-PP-C55). This is UDP-glucose:undecaprenyl-phosphate glucose-1-phosphate transferase (gumD) from Xanthomonas campestris pv. campestris.